The following is a 480-amino-acid chain: Probable WRKY transcription factor 61 (480 aa).

The tract at residues 30–108 is disordered; that stretch reads NQLMAKHNEP…RNYDDNEKSS (79 aa). 2 stretches are compositionally biased toward basic and acidic residues: residues 57 to 66 and 84 to 106; these read REKVNEREEL and NKEE…DNEK. The segment at residues 185–251 is a DNA-binding region (WRKY); that stretch reads CETPTMNDGC…YEGTHNHPLP (67 aa).

It localises to the nucleus. In terms of biological role, transcription factor. Interacts specifically with the W box (5'-(T)TGAC[CT]-3'), a frequently occurring elicitor-responsive cis-acting element. In Arabidopsis thaliana (Mouse-ear cress), this protein is Probable WRKY transcription factor 61 (WRKY61).